The sequence spans 234 residues: Enolase-phosphatase E1 (234 aa).

The tract at residues 212 to 234 is disordered; that stretch reads RPGNYPQPQHSHFKISSFEGLNP.

The protein belongs to the HAD-like hydrolase superfamily. MasA/MtnC family. As to quaternary structure, monomer. The cofactor is Mg(2+).

The catalysed reaction is 5-methylsulfanyl-2,3-dioxopentyl phosphate + H2O = 1,2-dihydroxy-5-(methylsulfanyl)pent-1-en-3-one + phosphate. It functions in the pathway amino-acid biosynthesis; L-methionine biosynthesis via salvage pathway; L-methionine from S-methyl-5-thio-alpha-D-ribose 1-phosphate: step 3/6. Its pathway is amino-acid biosynthesis; L-methionine biosynthesis via salvage pathway; L-methionine from S-methyl-5-thio-alpha-D-ribose 1-phosphate: step 4/6. In terms of biological role, bifunctional enzyme that catalyzes the enolization of 2,3-diketo-5-methylthiopentyl-1-phosphate (DK-MTP-1-P) into the intermediate 2-hydroxy-3-keto-5-methylthiopentenyl-1-phosphate (HK-MTPenyl-1-P), which is then dephosphorylated to form the acireductone 1,2-dihydroxy-3-keto-5-methylthiopentene (DHK-MTPene). This Leptospira interrogans serogroup Icterohaemorrhagiae serovar copenhageni (strain Fiocruz L1-130) protein is Enolase-phosphatase E1.